Here is a 149-residue protein sequence, read N- to C-terminus: Protein NrdI (149 aa).

Belongs to the NrdI family.

Functionally, probably involved in ribonucleotide reductase function. This chain is Protein NrdI, found in Malacoplasma penetrans (strain HF-2) (Mycoplasma penetrans).